Reading from the N-terminus, the 245-residue chain is 1-(5-phosphoribosyl)-5-[(5-phosphoribosylamino)methylideneamino] imidazole-4-carboxamide isomerase (245 aa).

Asp-15 (proton acceptor) is an active-site residue. Asp-135 (proton donor) is an active-site residue.

The protein belongs to the HisA/HisF family.

It localises to the cytoplasm. It carries out the reaction 1-(5-phospho-beta-D-ribosyl)-5-[(5-phospho-beta-D-ribosylamino)methylideneamino]imidazole-4-carboxamide = 5-[(5-phospho-1-deoxy-D-ribulos-1-ylimino)methylamino]-1-(5-phospho-beta-D-ribosyl)imidazole-4-carboxamide. Its pathway is amino-acid biosynthesis; L-histidine biosynthesis; L-histidine from 5-phospho-alpha-D-ribose 1-diphosphate: step 4/9. The chain is 1-(5-phosphoribosyl)-5-[(5-phosphoribosylamino)methylideneamino] imidazole-4-carboxamide isomerase from Haloquadratum walsbyi (strain DSM 16790 / HBSQ001).